Reading from the N-terminus, the 325-residue chain is GMP reductase (325 aa).

The active-site Thioimidate intermediate is the cysteine 174. An NADP(+)-binding site is contributed by 203–226; that stretch reads LIADGGIRTHGDIAKSIRFGASMV.

Belongs to the IMPDH/GMPR family. GuaC type 2 subfamily.

The enzyme catalyses IMP + NH4(+) + NADP(+) = GMP + NADPH + 2 H(+). Functionally, catalyzes the irreversible NADPH-dependent deamination of GMP to IMP. It functions in the conversion of nucleobase, nucleoside and nucleotide derivatives of G to A nucleotides, and in maintaining the intracellular balance of A and G nucleotides. The sequence is that of GMP reductase from Staphylococcus aureus (strain JH9).